Reading from the N-terminus, the 317-residue chain is Methionyl-tRNA formyltransferase (317 aa).

Residue 111 to 114 (SLLP) coordinates (6S)-5,6,7,8-tetrahydrofolate.

It belongs to the Fmt family.

The catalysed reaction is L-methionyl-tRNA(fMet) + (6R)-10-formyltetrahydrofolate = N-formyl-L-methionyl-tRNA(fMet) + (6S)-5,6,7,8-tetrahydrofolate + H(+). In terms of biological role, attaches a formyl group to the free amino group of methionyl-tRNA(fMet). The formyl group appears to play a dual role in the initiator identity of N-formylmethionyl-tRNA by promoting its recognition by IF2 and preventing the misappropriation of this tRNA by the elongation apparatus. The chain is Methionyl-tRNA formyltransferase from Chlorobium phaeobacteroides (strain BS1).